Here is a 505-residue protein sequence, read N- to C-terminus: RNA-splicing ligase RtcB homolog (505 aa).

Residues Asp-119, Cys-122, His-227, and His-259 each contribute to the Mn(2+) site. 226-230 contacts GMP; the sequence is NHYAE. Phosphoserine is present on Ser-300. His-353 provides a ligand contact to Mn(2+). GMP is bound by residues 353–354, 402–405, Ser-409, and 428–431; these read HN, GGTM, and HGAG. Catalysis depends on His-428, which acts as the GMP-histidine intermediate. Lys-496 participates in a covalent cross-link: Glycyl lysine isopeptide (Lys-Gly) (interchain with G-Cter in SUMO2). Lys-504 is a GMP binding site.

This sequence belongs to the RtcB family. As to quaternary structure, catalytic component of the tRNA-splicing ligase complex. It depends on Mn(2+) as a cofactor.

It localises to the nucleus. The protein resides in the cytoplasm. It carries out the reaction a 3'-end 3'-phospho-ribonucleotide-RNA + a 5'-end dephospho-ribonucleoside-RNA + GTP = a ribonucleotidyl-ribonucleotide-RNA + GMP + diphosphate. It catalyses the reaction a 3'-end 2',3'-cyclophospho-ribonucleotide-RNA + a 5'-end dephospho-ribonucleoside-RNA + GTP + H2O = a ribonucleotidyl-ribonucleotide-RNA + GMP + diphosphate + H(+). Catalytic subunit of the tRNA-splicing ligase complex that acts by directly joining spliced tRNA halves to mature-sized tRNAs by incorporating the precursor-derived splice junction phosphate into the mature tRNA as a canonical 3',5'-phosphodiester. May act as an RNA ligase with broad substrate specificity, and may function toward other RNAs. This is RNA-splicing ligase RtcB homolog from Bos taurus (Bovine).